We begin with the raw amino-acid sequence, 119 residues long: Large ribosomal subunit protein bL20 (119 aa).

The protein belongs to the bacterial ribosomal protein bL20 family.

Functionally, binds directly to 23S ribosomal RNA and is necessary for the in vitro assembly process of the 50S ribosomal subunit. It is not involved in the protein synthesizing functions of that subunit. This Shouchella clausii (strain KSM-K16) (Alkalihalobacillus clausii) protein is Large ribosomal subunit protein bL20.